The chain runs to 212 residues: Claudin-7-A (212 aa).

At 1–7 the chain is on the cytoplasmic side; the sequence is MANSGVQ. Residues 8–28 form a helical membrane-spanning segment; it reads LLGFGLSLIGIIGLIVGTILP. Residues 29–81 are Extracellular-facing; it reads QWKMSAYVGDSIITAVATYQGLWMSCAFQSTGQLQCKIYDSILQLDSDLQATR. A helical membrane pass occupies residues 82 to 102; it reads ALMIVGIIVSIAGLGVASIGM. Residues 103–119 are Cytoplasmic-facing; it reads KCTTCGADDKVRKTRTA. The helical transmembrane segment at 120 to 140 threads the bilayer; that stretch reads MTGGIILLVGALCAVVACSWF. Topologically, residues 141 to 162 are extracellular; sequence AHNVIRAFYNPFTPVNTKFEFG. The helical transmembrane segment at 163-183 threads the bilayer; the sequence is AAIFIAWGGSFLDVLGGAMLA. Residues 184–212 are Cytoplasmic-facing; it reads ASCPRSKQVSKYPKSNSTRSANGSNKEYV. Positions 191–212 are disordered; it reads QVSKYPKSNSTRSANGSNKEYV.

The protein belongs to the claudin family.

It localises to the cell junction. Its subcellular location is the tight junction. It is found in the cell membrane. Functionally, plays a major role in tight junction-specific obliteration of the intercellular space. The chain is Claudin-7-A from Danio rerio (Zebrafish).